The primary structure comprises 766 residues: BMP/retinoic acid-inducible neural-specific protein 3 (766 aa).

Residues 1-33 form the signal peptide; sequence MIWRRRAGAELSSLMALWEWIVLSLHCWVLAVA. Residues 74-264 form the MACPF domain; that stretch reads RYKIYREFGR…FVQAALSYIA (191 aa). N-linked (GlcNAc...) asparagine glycosylation is found at Asn-168, Asn-337, Asn-456, Asn-562, Asn-609, and Asn-641.

The protein belongs to the BRINP family. In terms of tissue distribution, expressed in the brain. Weakly expressed in embryonic stem (ES) cells. Expressed in ES-derived neural stem cells (NSCs) and neuronal cells.

Its subcellular location is the secreted. The protein resides in the mitochondrion. Its function is as follows. Inhibits neuronal cell proliferation by negative regulation of the cell cycle transition. Promotes pituitary gonadotrope cell proliferation, migration and invasion, when overexpressed. May play a role in cell pituitary tumor development. This chain is BMP/retinoic acid-inducible neural-specific protein 3 (Brinp3), found in Mus musculus (Mouse).